The following is a 450-amino-acid chain: tRNA-2-methylthio-N(6)-dimethylallyladenosine synthase (450 aa).

The MTTase N-terminal domain occupies 14 to 132; the sequence is GEFFIETWGC…FPNYLNEVKK (119 aa). Residues Cys23, Cys59, Cys93, Cys169, Cys173, and Cys176 each coordinate [4Fe-4S] cluster. In terms of domain architecture, Radical SAM core spans 155–385; sequence RKNSMKAFVT…VEVVNEISAK (231 aa). The 63-residue stretch at 388 to 450 folds into the TRAM domain; it reads KAYEGKIEEV…NSFSLTGEEI (63 aa).

It belongs to the methylthiotransferase family. MiaB subfamily. As to quaternary structure, monomer. [4Fe-4S] cluster is required as a cofactor.

The protein localises to the cytoplasm. It carries out the reaction N(6)-dimethylallyladenosine(37) in tRNA + (sulfur carrier)-SH + AH2 + 2 S-adenosyl-L-methionine = 2-methylsulfanyl-N(6)-dimethylallyladenosine(37) in tRNA + (sulfur carrier)-H + 5'-deoxyadenosine + L-methionine + A + S-adenosyl-L-homocysteine + 2 H(+). In terms of biological role, catalyzes the methylthiolation of N6-(dimethylallyl)adenosine (i(6)A), leading to the formation of 2-methylthio-N6-(dimethylallyl)adenosine (ms(2)i(6)A) at position 37 in tRNAs that read codons beginning with uridine. In Clostridium botulinum (strain Loch Maree / Type A3), this protein is tRNA-2-methylthio-N(6)-dimethylallyladenosine synthase.